We begin with the raw amino-acid sequence, 506 residues long: Maturase K (506 aa).

The protein belongs to the intron maturase 2 family. MatK subfamily.

The protein localises to the plastid. It localises to the chloroplast. Functionally, usually encoded in the trnK tRNA gene intron. Probably assists in splicing its own and other chloroplast group II introns. The protein is Maturase K of Erica tetralix (Cross-leaved heath).